A 341-amino-acid chain; its full sequence is uncharacterized protein (341 aa).

Residues Ser111, Asp247, and His275 contribute to the active site.

Belongs to the DmpD/TodF/XylF esterase family.

This is an uncharacterized protein from Mycobacterium bovis (strain ATCC BAA-935 / AF2122/97).